The chain runs to 474 residues: Poly(A) polymerase catalytic subunit (474 aa).

Residues Asp-193 and Asp-195 contribute to the active site.

This sequence belongs to the poxviridae poly(A) polymerase catalytic subunit family. Heterodimer of a large (catalytic) subunit and a small (regulatory) subunit.

The enzyme catalyses RNA(n) + ATP = RNA(n)-3'-adenine ribonucleotide + diphosphate. Its function is as follows. Polymerase that creates the 3'-poly(A) tail of mRNA's. The chain is Poly(A) polymerase catalytic subunit (PAPL) from Bos taurus (Bovine).